The sequence spans 618 residues: UvrABC system protein C (618 aa).

In terms of domain architecture, GIY-YIG spans 13–92 (DKPGVYLMKN…IKKYRPKYNI (80 aa)). In terms of domain architecture, UVR spans 204–239 (LDIVENFKLNMEKAAENLEFEKAAMLRDKINIIEKI).

It belongs to the UvrC family. Interacts with UvrB in an incision complex.

It localises to the cytoplasm. In terms of biological role, the UvrABC repair system catalyzes the recognition and processing of DNA lesions. UvrC both incises the 5' and 3' sides of the lesion. The N-terminal half is responsible for the 3' incision and the C-terminal half is responsible for the 5' incision. This Clostridium botulinum (strain ATCC 19397 / Type A) protein is UvrABC system protein C.